The following is a 212-amino-acid chain: Ropporin-1 (212 aa).

Positions 12 to 43 (PELPELLKQFTKAAIRTQPPDLIQWAAEYFGA) constitute an RIIa domain. Position 56 is a phosphoserine (serine 56). Residues 209 to 212 (VRLE) form an interaction with RHPN1 region.

It belongs to the ropporin family. Homodimer. Interacts with AKAP3. May interact with SPA17. Interacts with RHPN1. Interacts with FSCB; the interaction increases upon spermatozoa capacitation conditions. Interacts with CFAP61. Post-translationally, sumoylated, sumoylation decreases upon spermatozoa capacitation conditions.

It is found in the cell projection. Its subcellular location is the cilium. The protein localises to the flagellum. Important for male fertility. With ROPN1L, involved in fibrous sheath integrity and sperm motility, plays a role in PKA-dependent signaling processes required for spermatozoa capacitation. The polypeptide is Ropporin-1 (Ropn1) (Rattus norvegicus (Rat)).